The sequence spans 342 residues: tRNA dimethylallyltransferase (342 aa).

Position 39–46 (G39–T46) interacts with ATP. T41–T46 is a binding site for substrate. The segment at D64–Q67 is interaction with substrate tRNA.

This sequence belongs to the IPP transferase family. Monomer. Mg(2+) is required as a cofactor.

It carries out the reaction adenosine(37) in tRNA + dimethylallyl diphosphate = N(6)-dimethylallyladenosine(37) in tRNA + diphosphate. Functionally, catalyzes the transfer of a dimethylallyl group onto the adenine at position 37 in tRNAs that read codons beginning with uridine, leading to the formation of N6-(dimethylallyl)adenosine (i(6)A). The protein is tRNA dimethylallyltransferase of Chlamydia felis (strain Fe/C-56) (Chlamydophila felis).